Reading from the N-terminus, the 400-residue chain is Deoxyguanosinetriphosphate triphosphohydrolase-like protein (400 aa).

In terms of domain architecture, HD spans 73–215 (RLTHSIEVSQ…AAIADDIAYN (143 aa)).

The protein belongs to the dGTPase family. Type 2 subfamily.

This is Deoxyguanosinetriphosphate triphosphohydrolase-like protein from Bartonella henselae (strain ATCC 49882 / DSM 28221 / CCUG 30454 / Houston 1) (Rochalimaea henselae).